The sequence spans 616 residues: Glucoamylase P (616 aa).

The signal sequence occupies residues 1–29; it reads MRLLPSSCAGALSLLCSLAIAAPTELKAR. Trp149 provides a ligand contact to substrate. N-linked (GlcNAc...) asparagine glycosylation occurs at Asn200. Asp205 acts as the Proton acceptor in catalysis. The active-site Proton donor is Glu208. Residue Asn427 is glycosylated (N-linked (GlcNAc...) asparagine). One can recognise a CBM20 domain in the interval 501–608; that stretch reads VTSSCQVSIT…AVTTDDAWMG (108 aa).

This sequence belongs to the glycosyl hydrolase 15 family.

Its subcellular location is the secreted. It carries out the reaction Hydrolysis of terminal (1-&gt;4)-linked alpha-D-glucose residues successively from non-reducing ends of the chains with release of beta-D-glucose.. The polypeptide is Glucoamylase P (GAMP) (Amorphotheca resinae (Creosote fungus)).